A 334-amino-acid polypeptide reads, in one-letter code: Glycerol-3-phosphate dehydrogenase [NAD(P)+] (334 aa).

Positions 14, 34, and 107 each coordinate NADPH. Sn-glycerol 3-phosphate contacts are provided by lysine 107 and glycine 135. Alanine 139 is a binding site for NADPH. Lysine 190, aspartate 243, serine 253, arginine 254, and asparagine 255 together coordinate sn-glycerol 3-phosphate. Residue lysine 190 is the Proton acceptor of the active site. Arginine 254 lines the NADPH pocket. NADPH is bound by residues valine 272 and glutamate 273.

The protein belongs to the NAD-dependent glycerol-3-phosphate dehydrogenase family.

The protein localises to the cytoplasm. It carries out the reaction sn-glycerol 3-phosphate + NAD(+) = dihydroxyacetone phosphate + NADH + H(+). It catalyses the reaction sn-glycerol 3-phosphate + NADP(+) = dihydroxyacetone phosphate + NADPH + H(+). The protein operates within membrane lipid metabolism; glycerophospholipid metabolism. Its function is as follows. Catalyzes the reduction of the glycolytic intermediate dihydroxyacetone phosphate (DHAP) to sn-glycerol 3-phosphate (G3P), the key precursor for phospholipid synthesis. In Neorickettsia sennetsu (strain ATCC VR-367 / Miyayama) (Ehrlichia sennetsu), this protein is Glycerol-3-phosphate dehydrogenase [NAD(P)+].